The chain runs to 262 residues: MGKYNLTALRVRQIAVAQQSAGKLRQTPKWLDIMHDVPPTEVLVRNRPQQHQLVRQRLKTVPGASRPQAVFEVQEKRIKPKKASRMFQPVEIKYEEDQLRKEFFRDHPWELARPRVLVEKSGKDFERYNWSRLQQRGKHLDGESVVQRQLWLLNNVPDMTKSAAYDIARREFYRLRLQEDIERRVAAEEAEATGAVFGPTRLQIGMDLENKEYERWKEWAKLQAQLSDQRMAAFLGAPEVQAAEEQETSLDDDATEKVAVAA.

Positions 242-254 are enriched in acidic residues; the sequence is AAEEQETSLDDDA. Residues 242 to 262 form a disordered region; that stretch reads AAEEQETSLDDDATEKVAVAA.

Belongs to the mitochondrion-specific ribosomal protein mS23 family. Component of the mitochondrial small ribosomal subunit.

It is found in the mitochondrion. The polypeptide is Small ribosomal subunit protein mS23 (rsm25) (Aspergillus niger (strain ATCC MYA-4892 / CBS 513.88 / FGSC A1513)).